Consider the following 206-residue polypeptide: 2,3-bisphosphoglycerate-dependent phosphoglycerate mutase (206 aa).

Substrate contacts are provided by residues R9–N16, T22–G23, R61, E88–Y91, K99, R115–R116, and G159–N160. H10 acts as the Tele-phosphohistidine intermediate in catalysis. E88 serves as the catalytic Proton donor/acceptor.

This sequence belongs to the phosphoglycerate mutase family. BPG-dependent PGAM subfamily. In terms of assembly, homodimer.

It carries out the reaction (2R)-2-phosphoglycerate = (2R)-3-phosphoglycerate. It functions in the pathway carbohydrate degradation; glycolysis; pyruvate from D-glyceraldehyde 3-phosphate: step 3/5. Functionally, catalyzes the interconversion of 2-phosphoglycerate and 3-phosphoglycerate. The chain is 2,3-bisphosphoglycerate-dependent phosphoglycerate mutase from Bartonella tribocorum (strain CIP 105476 / IBS 506).